The following is a 615-amino-acid chain: 1-deoxy-D-xylulose-5-phosphate synthase (615 aa).

Thiamine diphosphate contacts are provided by residues His-72 and 111–113 (GHS). Asp-142 contacts Mg(2+). Residues 143–144 (GA), Asn-171, Tyr-278, and Glu-360 each bind thiamine diphosphate. Asn-171 lines the Mg(2+) pocket.

It belongs to the transketolase family. DXPS subfamily. Homodimer. Requires Mg(2+) as cofactor. Thiamine diphosphate serves as cofactor.

It catalyses the reaction D-glyceraldehyde 3-phosphate + pyruvate + H(+) = 1-deoxy-D-xylulose 5-phosphate + CO2. It participates in metabolic intermediate biosynthesis; 1-deoxy-D-xylulose 5-phosphate biosynthesis; 1-deoxy-D-xylulose 5-phosphate from D-glyceraldehyde 3-phosphate and pyruvate: step 1/1. Functionally, catalyzes the acyloin condensation reaction between C atoms 2 and 3 of pyruvate and glyceraldehyde 3-phosphate to yield 1-deoxy-D-xylulose-5-phosphate (DXP). This Campylobacter jejuni subsp. jejuni serotype O:23/36 (strain 81-176) protein is 1-deoxy-D-xylulose-5-phosphate synthase.